A 327-amino-acid polypeptide reads, in one-letter code: Sphingomyelin synthase-related 2 (327 aa).

The next 5 membrane-spanning stretches (helical) occupy residues Leu54 to Val74, Ala99 to Phe119, Val131 to Val151, Leu192 to Phe212, and Leu220 to Leu240. The active site involves His201. Topologically, residues Ala241 to Glu327 are cytoplasmic. Active-site residues include His244 and Asp248.

It belongs to the sphingomyelin synthase family.

It localises to the membrane. This Caenorhabditis elegans protein is Sphingomyelin synthase-related 2.